The following is a 398-amino-acid chain: Sphingosine 1-phosphate receptor 5 (398 aa).

Residues 1–40 (MEPGLLRPAPVSEVIVLHYNYTGKLRGARYQPGAGLRADA) lie on the Extracellular side of the membrane. Residue asparagine 20 is glycosylated (N-linked (GlcNAc...) asparagine). Residues 41–61 (VVCLAVCALIVLENLAVLVVL) traverse the membrane as a helical segment. Residues 62–70 (GRHPRFHAP) lie on the Cytoplasmic side of the membrane. A helical membrane pass occupies residues 71 to 91 (MFLLLGSLTLSDLLAGAAYAA). Residues 92–111 (NILLSGPLTLRLSPALWFAR) are Extracellular-facing. A helical transmembrane segment spans residues 112 to 132 (EGGVFVALAASVLSLLAIALE). The Cytoplasmic segment spans residues 133-151 (RLLTMERRGPAPAARRGRT). The helical transmembrane segment at 152–172 (LALAAGAWGVSLLLGLLPALG) threads the bilayer. The Extracellular segment spans residues 173-191 (WNCLGRLEACSTVLPLYAK). Residues 192–212 (AYVLFCVLAFVGILAAICGLY) form a helical membrane-spanning segment. Over 213–252 (ARIYCQVRAKAQRLRARPGAGEGTSARARGTPRSLALLRT) the chain is Cytoplasmic. The helical transmembrane segment at 253–273 (LSVVLVAFVACWGPLFLLLLL) threads the bilayer. Residues 274–287 (DVACPARACPVLLQ) lie on the Extracellular side of the membrane. The helical transmembrane segment at 288–308 (ADPFLGLAMANSLLNPIIYTF) threads the bilayer. Residues 309–398 (TNRDLRHALL…QTLVPPPAAD (90 aa)) lie on the Cytoplasmic side of the membrane. Cysteine 323 carries S-palmitoyl cysteine lipidation. The tract at residues 332–398 (SGTSRSPGST…QTLVPPPAAD (67 aa)) is disordered. Residues 334–343 (TSRSPGSTLG) are compositionally biased toward low complexity. At serine 337 the chain carries Phosphoserine. Residues 359-373 (SSSRSERSSPQRDGL) show a composition bias toward basic and acidic residues. Residue serine 381 is modified to Phosphoserine.

It belongs to the G-protein coupled receptor 1 family.

It localises to the cell membrane. Receptor for the lysosphingolipid sphingosine 1-phosphate (S1P). S1P is a bioactive lysophospholipid that elicits diverse physiological effect on most types of cells and tissues. Is coupled to both the G(i/O)alpha and G(12) subclass of heteromeric G-proteins. This chain is Sphingosine 1-phosphate receptor 5 (S1PR5), found in Sus scrofa (Pig).